The following is a 159-amino-acid chain: Large ribosomal subunit protein uL11 (159 aa).

Residues 137 to 149 (EGKDPREVQREVD) show a composition bias toward basic and acidic residues. The segment at 137-159 (EGKDPREVQREVDSGAWDKLLGG) is disordered.

This sequence belongs to the universal ribosomal protein uL11 family. In terms of assembly, part of the ribosomal stalk of the 50S ribosomal subunit. Interacts with L10 and the large rRNA to form the base of the stalk. L10 forms an elongated spine to which L12 dimers bind in a sequential fashion forming a multimeric L10(L12)X complex.

Its function is as follows. Forms part of the ribosomal stalk which helps the ribosome interact with GTP-bound translation factors. In Korarchaeum cryptofilum (strain OPF8), this protein is Large ribosomal subunit protein uL11.